Consider the following 153-residue polypeptide: MSNQLNTMDIKEIMNSLPHRYPFLLIDRVLDYTPGETLHAIKNVTINEPFFQGHFPIQPVMPGVLILEAMAQATGLLAYKTMEAAVTDDSLYYFAGIDKARFKRVVEPGDQLHFEVKMVKERRGIGVFTGVVKVDGELVCSAEIMCARREIKK.

His-54 is a catalytic residue.

The protein belongs to the thioester dehydratase family. FabZ subfamily.

It is found in the cytoplasm. It catalyses the reaction a (3R)-hydroxyacyl-[ACP] = a (2E)-enoyl-[ACP] + H2O. In terms of biological role, involved in unsaturated fatty acids biosynthesis. Catalyzes the dehydration of short chain beta-hydroxyacyl-ACPs and long chain saturated and unsaturated beta-hydroxyacyl-ACPs. This is 3-hydroxyacyl-[acyl-carrier-protein] dehydratase FabZ from Shewanella sediminis (strain HAW-EB3).